We begin with the raw amino-acid sequence, 204 residues long: Ribosomal RNA small subunit methyltransferase G (204 aa).

Residues G76, L81, 127–128, and R140 contribute to the S-adenosyl-L-methionine site; that span reads IE.

The protein belongs to the methyltransferase superfamily. RNA methyltransferase RsmG family.

It is found in the cytoplasm. The catalysed reaction is guanosine(527) in 16S rRNA + S-adenosyl-L-methionine = N(7)-methylguanosine(527) in 16S rRNA + S-adenosyl-L-homocysteine. Specifically methylates the N7 position of guanine in position 527 of 16S rRNA. The chain is Ribosomal RNA small subunit methyltransferase G from Francisella philomiragia subsp. philomiragia (strain ATCC 25017 / CCUG 19701 / FSC 153 / O#319-036).